The following is a 122-amino-acid chain: Hexon-interlacing protein (122 aa).

Residues 72–106 (VTELNESIDELQQKMTELEKRLKIMEEKIEEIKLA) adopt a coiled-coil conformation.

The protein belongs to the adenoviridae hexon-interlacing protein family. Homotrimer. Interacts with hexon protein; this interaction tethers the hexons together. Self-interacts with adjacent proteins. Interacts with kinesin light chain KLC1; this interaction leads to capsid disruption at the nuclear pore complex during virus entry into host cell.

The protein localises to the virion. The protein resides in the host nucleus. In terms of biological role, structural component of the virion that acts as a cement protein on the capsid exterior and forms triskelion structures consisting of three molecules that stabilize three hexon trimers at the center of each icosahedral facet and fixes the peripentonal hexons. Dispensable for assembly. During virus entry, recruits the anterograde motor kinesin-1 to the capsid docked at the nuclear pore complex thereby subjecting the docked capsid to a pulling force. The resulting tension leads to capsid disruption, dispersion of capsid fragments toward cell periphery and eventually viral DNA entry into the host nucleus. The protein is Hexon-interlacing protein of Tupaiidae (tree shrews).